The following is a 186-amino-acid chain: MGRYSRESDNVAKSCKARGPNLRVHFKNTHETAQAIKRMPLRRAQRYLKAVIDQKECVPFRRFNGGVGRCAQAKQWKTTQGRWPKKSAEFLLQLLRNAEANADCKGLDADRLVVHHIQVNRAQCLRRRTYRAHGRINPYMSSPCHVEVILTEKEEVVSKATDDEPTKKKLSKKKLQRQKEKMLRSE.

Basic and acidic residues-rich tracts occupy residues Val157–Lys167 and Arg177–Glu186. Positions Val157–Glu186 are disordered.

This sequence belongs to the universal ribosomal protein uL22 family.

The polypeptide is Large ribosomal subunit protein uL22 (RpL17) (Drosophila yakuba (Fruit fly)).